A 360-amino-acid polypeptide reads, in one-letter code: Cell division protein DivIB (360 aa).

The tract at residues 1–54 (MTEKDSNVEESVLEVEQASQVELDSEQISPAEKESVLAEEKEFSTDVDIPEMTA) is disordered. Over 1 to 139 (MTEKDSNVEE…VDIPSKVVWK (139 aa)) the chain is Cytoplasmic. Residues 17 to 28 (QASQVELDSEQI) are compositionally biased toward polar residues. Basic and acidic residues predominate over residues 31-44 (AEKESVLAEEKEFS). Residues 140–160 (AIPVLVTSLLLAALALYFISP) form a helical membrane-spanning segment. Residues 161 to 360 (TSKKKQIEVV…MEVGIYRYAS (200 aa)) lie on the Extracellular side of the membrane. Residues 162–233 (SKKKQIEVVG…ATFTIHIKEY (72 aa)) enclose the POTRA domain.

Belongs to the FtsQ/DivIB family. DivIB subfamily.

The protein localises to the cell membrane. Functionally, cell division protein that may be involved in stabilizing or promoting the assembly of the division complex. The sequence is that of Cell division protein DivIB from Streptococcus suis (strain GZ1).